The sequence spans 485 residues: Trk system potassium uptake protein TrkH (485 aa).

Topologically, residues 1-2 are cytoplasmic; that stretch reads MQ. A helical transmembrane segment spans residues 3-29; sequence FRSIIRIVGLLLALFSVTMLAPALVAL. Residues 30 to 35 lie on the Periplasmic side of the membrane; it reads LYRDGA. A helical transmembrane segment spans residues 36-57; that stretch reads GVPFVTTFFVLLFCGAMCWFPN. The Cytoplasmic portion of the chain corresponds to 58 to 65; that stretch reads RRHKHELK. A helical transmembrane segment spans residues 66–90; the sequence is SRDGFLIVVLFWTVLGSAGSLPFLI. Positions 98 to 109 form an intramembrane region, helical; Pore-forming; it reads VTDAFFESFSAL. An intramembrane segment occupies 110–115; it reads TTTGAT. Positions 110–115 are selectivity filter part 1; it reads TTTGAT. Residues Thr111 and Thr112 each contribute to the K(+) site. At 116–124 the chain is on the periplasmic side; the sequence is VIVGLDELP. The helical transmembrane segment at 125–150 threads the bilayer; the sequence is KAILFYRQFLQWFGGMGIIVLAVAIL. Topologically, residues 151-177 are cytoplasmic; it reads PVLGIGGMQLYRAEIPGPVKDTKMTPR. Residues 178–202 form a helical membrane-spanning segment; the sequence is IAETAKALWYIYLSLTIACAVAFWL. The Periplasmic segment spans residues 203–205; that stretch reads AGM. Thr206 is an intramembrane region. An intramembrane region (helical; Pore-forming) is located at residues 207 to 218; that stretch reads PFDAISHSFSTI. The stretch at 219–224 is an intramembrane region; that stretch reads AIGGFS. Residues 219–224 form a selectivity filter part 2 region; that stretch reads AIGGFS. K(+)-binding residues include Ile220 and Gly221. Residues 225 to 234 lie on the Periplasmic side of the membrane; it reads THDASMGYFD. The segment at residues 235 to 250 is an intramembrane region (helical); it reads SYAINLITVVFLLISA. The chain crosses the membrane as a helical span at residues 276 to 296; it reads FRAFIFIQVLLFLVCFLLLLK. Residues 303 to 318 constitute an intramembrane region (helical; Pore-forming); sequence PYDAFDQALFQTVSIS. An intramembrane segment occupies 319 to 324; that stretch reads TTAGFT. The segment at 319–324 is selectivity filter part 3; the sequence is TTAGFT. The K(+) site is built by Thr320 and Ala321. Residues 325 to 332 are Periplasmic-facing; sequence TTGFADWP. Residues 333–344 constitute an intramembrane region (helical); it reads LFLPVLLLFSSF. Residues 345 to 357 constitute an intramembrane region (note=Loop between two helices); sequence IGGCAGSTGGGMK. A helical membrane pass occupies residues 392-419; it reads PQRVVDAVWGFFSAYALVFVVCMLGLIA. At 420-421 the chain is on the periplasmic side; that stretch reads TG. Residues 422-423 lie within the membrane without spanning it; that stretch reads MD. Positions 424 to 434 form an intramembrane region, helical; Pore-forming; it reads ELSAFSAVAAT. Residues 435 to 441 lie within the membrane without spanning it; the sequence is LNNLGPG. The tract at residues 436–441 is selectivity filter part 4; sequence NNLGPG. K(+) is bound by residues Asn437 and Leu438. Residues 442-453 are Periplasmic-facing; sequence LGEVALHFGDVN. Residues 454–465 constitute an intramembrane region (helical); that stretch reads DKAKWVLIVSML.

It belongs to the TrkH potassium transport family. In terms of assembly, homodimer.

It localises to the cell inner membrane. Functionally, low-affinity potassium transport system. Interacts with trk system potassium uptake protein TrkA and requires TrkE for transport activity. Selective for permeation of potassium ion and rubidium ion over smaller ions such as natrium or litium. The chain is Trk system potassium uptake protein TrkH from Vibrio parahaemolyticus serotype O3:K6 (strain RIMD 2210633).